We begin with the raw amino-acid sequence, 201 residues long: Ribonuclease HII (201 aa).

Positions 10–200 constitute an RNase H type-2 domain; that stretch reads LIEAGCDEAG…LGDGQLELFS (191 aa). A divalent metal cation contacts are provided by Asp16, Glu17, and Asp108.

This sequence belongs to the RNase HII family. Mn(2+) serves as cofactor. Mg(2+) is required as a cofactor.

Its subcellular location is the cytoplasm. The enzyme catalyses Endonucleolytic cleavage to 5'-phosphomonoester.. Its function is as follows. Endonuclease that specifically degrades the RNA of RNA-DNA hybrids. The sequence is that of Ribonuclease HII from Bacteroides fragilis (strain ATCC 25285 / DSM 2151 / CCUG 4856 / JCM 11019 / LMG 10263 / NCTC 9343 / Onslow / VPI 2553 / EN-2).